The primary structure comprises 766 residues: Tetratricopeptide repeat protein 14 (766 aa).

The tract at residues 35–55 is disordered; it reads LGTAAEPARGAAPPPGAGRKE. Residues 125 to 207 form the S1 motif domain; that stretch reads GDIVIGRISS…YHEKLAVSLY (83 aa). TPR repeat units lie at residues 209–242, 306–339, 341–373, and 381–414; these read SSLP…NSNS, ALKC…DKQN, EALV…CPTH, and CQTL…DETF. The tract at residues 463–743 is disordered; it reads EEKRLKKKRR…PDSRVKKNLP (281 aa). Over residues 475-496 the composition is skewed to low complexity; sequence SSSSSVSSADESVSSSSSSSSS. The span at 497–506 shows a compositional bias: basic residues; it reads SHKRHKKSKR. A compositionally biased stretch (polar residues) spans 539–550; it reads PTNTSASFLNQK. Basic and acidic residues predominate over residues 551–562; the sequence is QEVEKLLEKQDR. A compositionally biased stretch (polar residues) spans 594–605; the sequence is FYNSYKTQAGSS. 2 stretches are compositionally biased toward basic and acidic residues: residues 606–616 and 629–657; these read KTEKPYKSERH and NSED…RRWE. Residues 661–673 are compositionally biased toward polar residues; it reads VKYSTSPASSDYS. S666 carries the post-translational modification Phosphoserine. Positions 707-738 are enriched in basic and acidic residues; sequence RVYEKEDSCGEGNRNEAPEEMLNSKEQPDSRV.

This sequence belongs to the TTC14 family.

The chain is Tetratricopeptide repeat protein 14 from Mus musculus (Mouse).